Consider the following 427-residue polypeptide: Four-jointed box protein 1 (427 aa).

Positions 1–18 are cleaved as a signal peptide; the sequence is MRALSANLFAVLLMCALA. Asn81, Asn244, and Asn270 each carry an N-linked (GlcNAc...) asparagine glycan.

It localises to the secreted. Its function is as follows. May act as an inhibitor of dendrite extension and branching. This chain is Four-jointed box protein 1 (fjx1), found in Xiphophorus maculatus (Southern platyfish).